We begin with the raw amino-acid sequence, 286 residues long: B3 domain-containing protein REM20 (286 aa).

The segment at residues 9–102 is a DNA-binding region (TF-B3); sequence PRFFKVFLVE…TFEVSVFDRW (94 aa). A disordered region spans residues 117–161; sequence SDSDSDSVVEDEKDSTDVVEDDDDEDEDEDEDDDGSFDEDEEISQ. Positions 119–159 are enriched in acidic residues; the sequence is SDSDSVVEDEKDSTDVVEDDDDEDEDEDEDDDGSFDEDEEI.

It localises to the nucleus. This Arabidopsis thaliana (Mouse-ear cress) protein is B3 domain-containing protein REM20 (REM20).